We begin with the raw amino-acid sequence, 368 residues long: QMGLAENQLTSDLVEDWILNNPEASICTPEGINDFRAIANFQDYHGLAEFRNAVAKFMARTRGNRITFDPDRIVMSGGATGAHEVTAFCLADPGEAFLVPIPYYPGFDRDLRWRTGVKLVPVMCDSSNNFVLTKEALEDAYEKAREDNIRVKGLLITNPSNPLGTIMDRKTLRTVVSFINEKRIHLVCDEIYAATVFSQPGFISIAEILEDETDIECDRNLVHIVYSLSKDMGFPGFRVGIIYSYNDAVVNCARKMSSFGLVSTQTQYLLASMLNDDEFVERFLAESAKRLAQRFRVFTGGLAKVGIKCLQSNAGLFVWMDLRQLLKKPTFDSETELWKVIIHEVKINVSPGYSFHCTEPGWFRVCFA.

An N6-(pyridoxal phosphate)lysine modification is found at Lys230.

It belongs to the class-I pyridoxal-phosphate-dependent aminotransferase family. Homodimer. It depends on pyridoxal 5'-phosphate as a cofactor.

It carries out the reaction S-adenosyl-L-methionine = 1-aminocyclopropane-1-carboxylate + S-methyl-5'-thioadenosine + H(+). The protein operates within alkene biosynthesis; ethylene biosynthesis via S-adenosyl-L-methionine; ethylene from S-adenosyl-L-methionine: step 1/2. Functionally, catalyzes the formation of 1-aminocyclopropane-1-carboxylate, a direct precursor of ethylene in higher plants. This chain is 1-aminocyclopropane-1-carboxylate synthase (ACS5), found in Vigna radiata var. radiata (Mung bean).